Consider the following 364-residue polypeptide: Alanine racemase (364 aa).

Catalysis depends on Lys-35, which acts as the Proton acceptor; specific for D-alanine. At Lys-35 the chain carries N6-(pyridoxal phosphate)lysine. Residue Arg-131 coordinates substrate. Tyr-256 (proton acceptor; specific for L-alanine) is an active-site residue. Residue Met-304 participates in substrate binding.

The protein belongs to the alanine racemase family. The cofactor is pyridoxal 5'-phosphate.

It carries out the reaction L-alanine = D-alanine. The protein operates within amino-acid biosynthesis; D-alanine biosynthesis; D-alanine from L-alanine: step 1/1. Its function is as follows. Catalyzes the interconversion of L-alanine and D-alanine. May also act on other amino acids. This chain is Alanine racemase (alr), found in Chromohalobacter salexigens (strain ATCC BAA-138 / DSM 3043 / CIP 106854 / NCIMB 13768 / 1H11).